Here is a 460-residue protein sequence, read N- to C-terminus: tRNA modification GTPase MnmE (460 aa).

The (6S)-5-formyl-5,6,7,8-tetrahydrofolate site is built by arginine 29, glutamate 89, and arginine 128. The TrmE-type G domain maps to 224-382 (GVPTVIIGKP…LKQNLLEIIQ (159 aa)). K(+) is bound at residue asparagine 234. GTP is bound by residues 234–239 (NAGKST), 253–259 (SEIAGTT), and 278–281 (DTAG). Residue serine 238 coordinates Mg(2+). K(+) is bound by residues serine 253, isoleucine 255, and threonine 258. Threonine 259 is a Mg(2+) binding site. Lysine 460 lines the (6S)-5-formyl-5,6,7,8-tetrahydrofolate pocket.

Belongs to the TRAFAC class TrmE-Era-EngA-EngB-Septin-like GTPase superfamily. TrmE GTPase family. As to quaternary structure, homodimer. Heterotetramer of two MnmE and two MnmG subunits. K(+) is required as a cofactor.

Its subcellular location is the cytoplasm. Exhibits a very high intrinsic GTPase hydrolysis rate. Involved in the addition of a carboxymethylaminomethyl (cmnm) group at the wobble position (U34) of certain tRNAs, forming tRNA-cmnm(5)s(2)U34. The chain is tRNA modification GTPase MnmE from Cytophaga hutchinsonii (strain ATCC 33406 / DSM 1761 / CIP 103989 / NBRC 15051 / NCIMB 9469 / D465).